We begin with the raw amino-acid sequence, 411 residues long: Creatinase (411 aa).

Histidine 240 is a catalytic residue.

The protein belongs to the peptidase M24 family. Creatinase subfamily. In terms of assembly, homodimer.

It catalyses the reaction creatine + H2O = sarcosine + urea. The polypeptide is Creatinase (Bacillus sp. (strain B-0618)).